A 156-amino-acid polypeptide reads, in one-letter code: Acyl carrier protein, mitochondrial (156 aa).

Residues 1–68 constitute a mitochondrion transit peptide; sequence MASRVLSAYV…GRVTQLCRQY (68 aa). Residues 77–152 enclose the Carrier domain; that stretch reads EGIQDRVLYV…EIVDYIADKK (76 aa). Residue K88 is modified to N6-acetyllysine. An O-(pantetheine 4'-phosphoryl)serine modification is found at S112.

It belongs to the acyl carrier protein (ACP) family. As to quaternary structure, mammalian complex I is composed of 45 different subunits. Interacts with ETFRF1. Identified in a complex composed of MALSU1, MIEF1 upstream open reading frame protein and NDUFAB1; within the trimeric complex, MIEF1 upstream open reading frame protein functions as a bridging scaffold that interacts with MALSU1 on one side, and with NDUFAB1 on the other side. The complex interacts with the mitochondrial large ribosomal subunit. Interacts with alpha-1-microglobulin chain; this interaction is required for the maintenance of mitochondrial redox homeostasis. Component of the mitochondrial core iron-sulfur cluster (ISC) complex composed of NFS1, LYRM4, NDUFAB1, ISCU, FXN, and FDX2; this complex is a heterohexamer containing two copies of each monomer. Component of the cyteine desulfurase complex composed of NFS1, LYRM4 and NDUFAB1; this complex contributes to the stability and cysteine desulfurase activity of NFS1. In terms of processing, phosphopantetheinylation at Ser-112 is essential for interactions with LYR motif-containing proteins.

It localises to the mitochondrion. In terms of biological role, carrier of the growing fatty acid chain in fatty acid biosynthesis. Accessory and non-catalytic subunit of the mitochondrial membrane respiratory chain NADH dehydrogenase (Complex I), which functions in the transfer of electrons from NADH to the respiratory chain. Accessory protein, of the core iron-sulfur cluster (ISC) assembly complex, that regulates, in association with LYRM4, the stability and the cysteine desulfurase activity of NFS1 and participates in the [2Fe-2S] clusters assembly on the scaffolding protein ISCU. The core iron-sulfur cluster (ISC) assembly complex is involved in the de novo synthesis of a [2Fe-2S] cluster, the first step of the mitochondrial iron-sulfur protein biogenesis. This process is initiated by the cysteine desulfurase complex (NFS1:LYRM4:NDUFAB1) that produces persulfide which is delivered on the scaffold protein ISCU in a FXN-dependent manner. Then this complex is stabilized by FDX2 which provides reducing equivalents to accomplish the [2Fe-2S] cluster assembly. Finally, the [2Fe-2S] cluster is transferred from ISCU to chaperone proteins, including HSCB, HSPA9 and GLRX5. The protein is Acyl carrier protein, mitochondrial of Pongo pygmaeus (Bornean orangutan).